A 745-amino-acid chain; its full sequence is Poly(A) polymerase alpha (745 aa).

Low complexity predominate over residues 1-17 (MPFPVTTQGSQQTQPPQ). The segment at 1–22 (MPFPVTTQGSQQTQPPQKHYGI) is disordered. Serine 10 and serine 24 each carry phosphoserine. ATP is bound by residues 100-102 (FGS), threonine 109, 113-115 (DID), aspartate 167, lysine 228, tyrosine 237, and 246-247 (GV). Positions 113, 115, and 167 each coordinate Mg(2+). Residues lysine 444, lysine 445, lysine 506, and lysine 507 each participate in a glycyl lysine isopeptide (Lys-Gly) (interchain with G-Cter in SUMO) cross-link. The Nuclear localization signal 1 signature appears at 490–507 (RKQLHQLLPNHVLQKKKK). The segment at 508–643 (HSTEGVKLTA…TSGNAATKIP (136 aa)) is ser/Thr-rich. Low complexity predominate over residues 523–534 (LDLSMDSDNSMS). 2 disordered regions span residues 523–565 (LDLS…AVTA) and 577–704 (SVPQ…SETI). Polar residues predominate over residues 535-557 (VPSPTSATKTSPLNSSGSSQGRN). Phosphoserine occurs at positions 537 and 558. Low complexity-rich tracts occupy residues 583 to 594 (SSESSGGTSSES) and 611 to 640 (TVSR…NAAT). Lysine 641 and lysine 650 each carry N6-acetyllysine. The Nuclear localization signal 2 motif lies at 650 to 665 (KRTSSPHKEESPKKTK). Basic and acidic residues-rich tracts occupy residues 655 to 666 (PHKEESPKKTKT) and 682 to 692 (GHDKTEAKEQL). The required for interaction with NUDT21 stretch occupies residues 677-745 (CLALSGHDKT…KNSIKLRLNR (69 aa)). Over residues 694-704 (TETSTTQSETI) the composition is skewed to low complexity. Position 736 is an N6-acetyllysine; alternate (lysine 736). Residue lysine 736 forms a Glycyl lysine isopeptide (Lys-Gly) (interchain with G-Cter in SUMO); alternate linkage. The residue at position 738 (serine 738) is a Phosphoserine. The residue at position 740 (lysine 740) is an N6-acetyllysine; alternate. A Glycyl lysine isopeptide (Lys-Gly) (interchain with G-Cter in SUMO); alternate cross-link involves residue lysine 740.

Belongs to the poly(A) polymerase family. In terms of assembly, monomer. Found in a complex with CPSF1, FIP1L1 and PAPOLA. Interacts with AHCYL1 and FIP1L1; the interaction with AHCYL1 seems to increase interaction with FIP1L1. Interacts with NUDT21; the interaction is diminished by acetylation. Interacts with KPNB1; the interaction promotes PAP nuclear import and is inhibited by acetylation of PAP. Requires Mg(2+) as cofactor. Mn(2+) serves as cofactor. Post-translationally, polysumoylated. Varying sumoylation depending on tissue- and cell-type. Highly sumoylated in bladder and NIH 3T3 cells. Sumoylation is required for nuclear localization and enhances PAP stability. Desumoylated by SENP1. Inhibits polymerase activity. In terms of processing, hyperphosphorylation on multiple CDK2 consensus and non-consensus sites in the C-terminal Ser/Thr-rich region represses PAP activity in late M-phase. Phosphorylation/dephosphorylation may regulate the interaction between PAP and CPSF. Acetylated in the C-terminus. Acetylation decreases interaction with NUDT21 and KPNB1, and inhibits nuclear localization through inhibiting binding to the importin alpha/beta complex.

The protein resides in the cytoplasm. It localises to the nucleus. It catalyses the reaction RNA(n) + ATP = RNA(n)-3'-adenine ribonucleotide + diphosphate. Functionally, polymerase that creates the 3'-poly(A) tail of mRNA's. Also required for the endoribonucleolytic cleavage reaction at some polyadenylation sites. May acquire specificity through interaction with a cleavage and polyadenylation specificity factor (CPSF) at its C-terminus. The polypeptide is Poly(A) polymerase alpha (PAPOLA) (Homo sapiens (Human)).